Reading from the N-terminus, the 311-residue chain is Solute carrier family 25 member 36 (311 aa).

3 Solcar repeats span residues 4 to 108 (RDTL…CKEK), 116 to 203 (DSTQ…IKQK), and 224 to 308 (SDFV…VVYL). A run of 6 helical transmembrane segments spans residues 7 to 27 (LVHL…TCPL), 41 to 57 (LYIS…ASVN), 111 to 131 (GVFD…AGFT), 180 to 200 (MSAS…YESI), 226 to 246 (FVRM…IAYP), and 291 to 311 (QIPN…LLNG).

This sequence belongs to the mitochondrial carrier (TC 2.A.29) family.

The protein resides in the mitochondrion inner membrane. The enzyme catalyses UTP(in) + CTP(out) = UTP(out) + CTP(in). It carries out the reaction CTP(out) + UDP(in) = CTP(in) + UDP(out). It catalyses the reaction UMP(in) + CTP(out) = UMP(out) + CTP(in). The catalysed reaction is dUTP(in) + CTP(out) = dUTP(out) + CTP(in). The enzyme catalyses dUMP(in) + CTP(out) = dUMP(out) + CTP(in). It carries out the reaction CDP(in) + CTP(out) = CDP(out) + CTP(in). It catalyses the reaction CTP(out) + CMP(in) = CTP(in) + CMP(out). The catalysed reaction is dCTP(in) + CTP(out) = dCTP(out) + CTP(in). The enzyme catalyses dCDP(in) + CTP(out) = dCDP(out) + CTP(in). It carries out the reaction dCMP(in) + CTP(out) = dCMP(out) + CTP(in). It catalyses the reaction GTP(in) + CTP(out) = GTP(out) + CTP(in). The catalysed reaction is CTP(out) + GDP(in) = CTP(in) + GDP(out). The enzyme catalyses GMP(in) + CTP(out) = GMP(out) + CTP(in). It carries out the reaction dGTP(in) + CTP(out) = dGTP(out) + CTP(in). It catalyses the reaction dGMP(in) + CTP(out) = dGMP(out) + CTP(in). The catalysed reaction is ITP(in) + CTP(out) = ITP(out) + CTP(in). The enzyme catalyses IDP(in) + CTP(out) = IDP(out) + CTP(in). It carries out the reaction IMP(in) + CTP(out) = IMP(out) + CTP(in). It catalyses the reaction CTP(out) = CTP(in). In terms of biological role, mitochondrial transporter that imports/exports pyrimidine nucleotides into and from mitochondria. Selectively transports cytosine, guanosine, inosine and uridine (deoxy)nucleoside mono-, di-, and triphosphates by antiport mechanism. Catalyzes uniport at much lower rate. May import (deoxy)nucleoside triphosphates in exchange for intramitochondrial (deoxy)nucleoside mono- and diphosphates, thus providing precursors necessary for de novo synthesis of mitochondrial DNA and RNA while exporting products of their catabolism. Participates in mitochondrial genome maintenance, regulation of mitochondrial membrane potential and mitochondrial respiration. This is Solute carrier family 25 member 36 (Slc25a36) from Mus musculus (Mouse).